Here is a 418-residue protein sequence, read N- to C-terminus: CinA-like protein (418 aa).

It belongs to the CinA family.

This Leptospira interrogans serogroup Icterohaemorrhagiae serovar copenhageni (strain Fiocruz L1-130) protein is CinA-like protein.